Here is a 301-residue protein sequence, read N- to C-terminus: MPIIIDKDLPARKVLQKENIFVMTKERAVTQDIRALKIAILNLMPTKQETEAQLLRLIGNTPLQLDVHLLHMESHLSRNVAQDHLTSFYKTFRDIEDEKFDGLIITGAPVETLSFEEVDYWEELGRIMEYSKTNVTSTLHICWGAQAGLYYHYGVPKYPLAEKMFGVFEHEVREQHVKLLQGFDEVFFAPHSRHTEVRESDIEKVKELTLLANSEEAGVHLAIGQEGRQVFALGHSEYSCDTLKQEYERDCQRGLNIDVPKNYFKHNNPNEKPIVRWRSHGNLLFSNWLNYYVYQETPYIL.

Cys-142 (acyl-thioester intermediate) is an active-site residue. Lys-163 and Ser-192 together coordinate substrate. His-235 functions as the Proton acceptor in the catalytic mechanism. Glu-237 is a catalytic residue. Arg-249 contributes to the substrate binding site.

The protein belongs to the MetA family.

It localises to the cytoplasm. It catalyses the reaction L-homoserine + acetyl-CoA = O-acetyl-L-homoserine + CoA. Its pathway is amino-acid biosynthesis; L-methionine biosynthesis via de novo pathway; O-acetyl-L-homoserine from L-homoserine: step 1/1. Its function is as follows. Transfers an acetyl group from acetyl-CoA to L-homoserine, forming acetyl-L-homoserine. The chain is Homoserine O-acetyltransferase from Bacillus mycoides (strain KBAB4) (Bacillus weihenstephanensis).